The following is a 370-amino-acid chain: Galanin receptor type 3 (370 aa).

Residues 1 to 20 (MADIQNISLDSPGSVGAVAV) are Extracellular-facing. Residue N6 is glycosylated (N-linked (GlcNAc...) asparagine). A helical membrane pass occupies residues 21-41 (PVVFALIFLLGMVGNGLVLAV). The Cytoplasmic portion of the chain corresponds to 42-57 (LLQPGPSAWQEPGSTT). Residues 58-78 (DLFILNLAVADLCFILCCVPF) form a helical membrane-spanning segment. The Extracellular portion of the chain corresponds to 79–96 (QAAIYTLDAWLFGAFVCK). C95 and C172 are disulfide-bonded. Residues 97-118 (TVHLLIYLTMYASSFTLAAVSV) traverse the membrane as a helical segment. Topologically, residues 119–138 (DRYLAVRHPLRSRALRTPRN) are cytoplasmic. The helical transmembrane segment at 139 to 159 (ARAAVGLVWLLAALFSAPYLS) threads the bilayer. The Extracellular segment spans residues 160–184 (YYGTVRYGALELCVPAWEDARRRAL). A helical transmembrane segment spans residues 185-205 (DVATFAAGYLLPVTVVSLAYG). Residues 206-236 (RTLCFLWAAVGPAGAAAAEARRRATGRAGRA) lie on the Cytoplasmic side of the membrane. The chain crosses the membrane as a helical span at residues 237-257 (MLTVAALYALCWGPHHALILC). Residues 258-259 (FW) lie on the Extracellular side of the membrane. The helical transmembrane segment at 260 to 280 (YGRFAFSPATYACRLASHCLA) threads the bilayer. The Cytoplasmic segment spans residues 281 to 370 (YANSCLNPLV…RLTLSARGPQ (90 aa)). Residue C308 is the site of S-palmitoyl cysteine attachment. Residues 328 to 370 (QPASSGPAGYPGDARPRGWSMEPRGDALRGGETRLTLSARGPQ) form a disordered region. Over residues 350-359 (PRGDALRGGE) the composition is skewed to basic and acidic residues.

It belongs to the G-protein coupled receptor 1 family.

The protein localises to the cell membrane. Functionally, receptor for the hormone galanin and spexin-1. This Mus musculus (Mouse) protein is Galanin receptor type 3 (Galr3).